The primary structure comprises 153 residues: Ribosome maturation factor RimP (153 aa).

Belongs to the RimP family.

The protein localises to the cytoplasm. In terms of biological role, required for maturation of 30S ribosomal subunits. In Clostridium botulinum (strain 657 / Type Ba4), this protein is Ribosome maturation factor RimP.